Here is a 258-residue protein sequence, read N- to C-terminus: UDP-N-acetylenolpyruvoylglucosamine reductase (258 aa).

Arg142 is a catalytic residue. The active-site Proton donor is Ser184. Glu254 is a catalytic residue.

The protein belongs to the MurB family. The cofactor is FAD.

Its subcellular location is the cytoplasm. The catalysed reaction is UDP-N-acetyl-alpha-D-muramate + NADP(+) = UDP-N-acetyl-3-O-(1-carboxyvinyl)-alpha-D-glucosamine + NADPH + H(+). It participates in cell wall biogenesis; peptidoglycan biosynthesis. Functionally, cell wall formation. The chain is UDP-N-acetylenolpyruvoylglucosamine reductase from Campylobacter jejuni (strain RM1221).